Reading from the N-terminus, the 115-residue chain is Ig heavy chain V region PJ14 (115 aa).

Positions 1-19 (MAVLALLFCLVTFPSCILS) are cleaved as a signal peptide. The Ig-like domain occupies 20 to 115 (QVQLKESGPG…TDDTARYYCA (96 aa)).

This is Ig heavy chain V region PJ14 from Mus musculus (Mouse).